A 683-amino-acid polypeptide reads, in one-letter code: MSSGTMKFNGYLRVRIGEAVGLQPTRWSLRHSLFKKGHQLLDPYLTVSVDQVRVGQTSTKQKTNKPTYNEEFCTNVSDGGHLELAVFHETPLGYDHFVANCTLQFQELLRTAGTSDTFEGWVDLEPEGKVFVVITLTGSFTEATLQRDRIFKHFTRKRQRAMRRRVHQVNGHKFMATYLRQPTYCSHCREFIWGVFGKQGYQCQVCTCVVHKRCHHLIVTACTCQNNINKVDAKIAEQRFGINIPHKFNVHNYKVPTFCDHCGSLLWGIMRQGLQCKICKMNVHIRCQANVAPNCGVNAVELAKTLAGMGLQPGNISPTSKLISRSTLRRQGKEGSKEGNGIGVNSSSRFGIDNFEFIRVLGKGSFGKVMLARIKETGELYAVKVLKKDVILQDDDVECTMTEKRILSLARNHPFLTQLFCCFQTPDRLFFVMEFVNGGDLMFHIQKSRRFDEARARFYAAEIISALMFLHEKGIIYRDLKLDNVLLDHEGHCKLADFGMCKEGICNGVTTATFCGTPDYIAPEILQEMLYGPAVDWWAMGVLLYEMLCGHAPFEAENEDDLFEAILNDEVVYPTWLHEDATGILKSFMTKNPTMRLGSLTQGGEHEILRHPFFKEIDWVQLNHRQLEPPFRPRIKSREDVSNFDPDFIKEEPVLTPIDEGHLPMINQDEFRNFSYVSPELQP.

One can recognise a C2 domain in the interval 1 to 118 (MSSGTMKFNG…LRTAGTSDTF (118 aa)). S28 and S32 each carry phosphoserine. 2 Phorbol-ester/DAG-type zinc fingers span residues 171-222 (GHKF…VTAC) and 245-295 (PHKF…APNC). At S317 the chain carries Phosphoserine. The 260-residue stretch at 355–614 (FEFIRVLGKG…EHEILRHPFF (260 aa)) folds into the Protein kinase domain. ATP is bound by residues 361–369 (LGKGSFGKV) and K384. The active-site Proton acceptor is D479. T513 bears the Phosphothreonine; by PDPK1 mark. One can recognise an AGC-kinase C-terminal domain in the interval 615–683 (KEIDWVQLNH…FSYVSPELQP (69 aa)). Phosphothreonine is present on T656. S675 is modified (phosphoserine).

Belongs to the protein kinase superfamily. AGC Ser/Thr protein kinase family. PKC subfamily. As to quaternary structure, interacts with FYN. Interacts with RALA. Interacts with DGKQ.

Its subcellular location is the cytoplasm. The catalysed reaction is L-seryl-[protein] + ATP = O-phospho-L-seryl-[protein] + ADP + H(+). It carries out the reaction L-threonyl-[protein] + ATP = O-phospho-L-threonyl-[protein] + ADP + H(+). With respect to regulation, novel PKCs (PRKCD, PRKCE, PRKCH and PRKCQ) are calcium-insensitive, but activated by diacylglycerol (DAG) and phosphatidylserine. Three specific sites; Thr-513 (activation loop of the kinase domain), Thr-656 (turn motif) and Ser-675 (hydrophobic region), need to be phosphorylated for its full activation. In terms of biological role, calcium-independent, phospholipid- and diacylglycerol (DAG)-dependent serine/threonine-protein kinase that is involved in the regulation of cell differentiation in keratinocytes and pre-B cell receptor, mediates regulation of epithelial tight junction integrity and foam cell formation, and is required for glioblastoma proliferation and apoptosis prevention in MCF-7 cells. In keratinocytes, binds and activates the tyrosine kinase FYN, which in turn blocks epidermal growth factor receptor (EGFR) signaling and leads to keratinocyte growth arrest and differentiation. Associates with the cyclin CCNE1-CDK2-CDKN1B complex and inhibits CDK2 kinase activity, leading to RB1 dephosphorylation and thereby G1 arrest in keratinocytes. In association with RALA activates actin depolymerization, which is necessary for keratinocyte differentiation. In the pre-B cell receptor signaling, functions downstream of BLNK by up-regulating IRF4, which in turn activates L chain gene rearrangement. Regulates epithelial tight junctions (TJs) by phosphorylating occludin (OCLN) on threonine residues, which is necessary for the assembly and maintenance of TJs. In association with PLD2 and via TLR4 signaling, is involved in lipopolysaccharide (LPS)-induced RGS2 down-regulation and foam cell formation. Upon PMA stimulation, mediates glioblastoma cell proliferation by activating the mTOR pathway, the PI3K/AKT pathway and the ERK1-dependent phosphorylation of ELK1. Involved in the protection of glioblastoma cells from irradiation-induced apoptosis by preventing caspase-9 activation. In camptothecin-treated MCF-7 cells, regulates NF-kappa-B upstream signaling by activating IKBKB, and confers protection against DNA damage-induced apoptosis. Promotes oncogenic functions of ATF2 in the nucleus while blocking its apoptotic function at mitochondria. Phosphorylates ATF2 which promotes its nuclear retention and transcriptional activity and negatively regulates its mitochondrial localization. This is Protein kinase C eta type (Prkch) from Rattus norvegicus (Rat).